A 209-amino-acid chain; its full sequence is Homeobox protein ceh-2 (209 aa).

Residues 1–14 show a composition bias toward basic and acidic residues; the sequence is MTLKFSVERLVDSE. Disordered stretches follow at residues 1–46 and 181–209; these read MTLK…KSGK and HKRVRLEGSDPNAPMSNDEDDEDDKKSVS. Residues 15 to 24 show a composition bias toward acidic residues; the sequence is KESEEADVEE. Residues 126–185 constitute a DNA-binding region (homeobox); that stretch reads NKRIRTAFSASQLIQLEKAFEGNHYVVGNERKQLAAKLSLTETQVKVWFQNRRTKHKRVR.

It belongs to the EMX homeobox family. As to expression, in the anterior pharynx, expressed in the I3 interneuron, the NSM and M3 motor neuron pairs, the three m2 muscle cells and the three e2 epithelial cells (at protein level).

It is found in the nucleus. In terms of biological role, required for activity of the M3 pharyngeal motor neuron. The polypeptide is Homeobox protein ceh-2 (Caenorhabditis elegans).